Reading from the N-terminus, the 610-residue chain is Sterol O-acyltransferase 1 (610 aa).

Residues Ser-21 and Ser-45 each carry the phosphoserine modification. A disordered region spans residues 41 to 81 (SMEVSPRSSTTSLVEPVESTEGVESTEAERVAGKQEQEEEY). Positions 67–76 (EAERVAGKQE) are enriched in basic and acidic residues. 5 consecutive transmembrane segments (helical) span residues 182-202 (LESN…WIAI), 229-249 (LFTI…VVFV), 264-284 (GFVA…PIYV), 371-391 (ISCS…QINY), and 409-429 (IIGT…PVAM). Residues 491-497 (FYGDWWN) carry the FYXDWWN motif motif. The next 2 helical transmembrane spans lie at 535–555 (ATLF…FAIF) and 590–610 (VVFS…YLTL). His-547 is a catalytic residue.

This sequence belongs to the membrane-bound acyltransferase family. Sterol o-acyltransferase subfamily.

Its subcellular location is the endoplasmic reticulum membrane. The catalysed reaction is lanosterol + an acyl-CoA = lanosteryl ester + CoA. Functionally, sterol O-acyltransferase that catalyzes the formation of stery esters. This chain is Sterol O-acyltransferase 1, found in Saccharomyces cerevisiae (strain ATCC 204508 / S288c) (Baker's yeast).